The primary structure comprises 233 residues: Large ribosomal subunit protein uL1 (233 aa).

It belongs to the universal ribosomal protein uL1 family. Part of the 50S ribosomal subunit.

In terms of biological role, binds directly to 23S rRNA. The L1 stalk is quite mobile in the ribosome, and is involved in E site tRNA release. Protein L1 is also a translational repressor protein, it controls the translation of the L11 operon by binding to its mRNA. This Rhodospirillum rubrum (strain ATCC 11170 / ATH 1.1.1 / DSM 467 / LMG 4362 / NCIMB 8255 / S1) protein is Large ribosomal subunit protein uL1.